Consider the following 87-residue polypeptide: Large ribosomal subunit protein bL28 (87 aa).

It belongs to the bacterial ribosomal protein bL28 family.

The sequence is that of Large ribosomal subunit protein bL28 from Akkermansia muciniphila (strain ATCC BAA-835 / DSM 22959 / JCM 33894 / BCRC 81048 / CCUG 64013 / CIP 107961 / Muc).